Reading from the N-terminus, the 162-residue chain is Necrosis-inducing secreted protein 1 (162 aa).

The first 19 residues, 1-19, serve as a signal peptide directing secretion; sequence MQFLTSLAAAASLVSLASA. N-linked (GlcNAc...) asparagine glycosylation is found at asparagine 88, asparagine 126, asparagine 133, and asparagine 150. A BAK1/SERK3-binding region spans residues 103 to 132; it reads EYVIAASLFSLYGASSSPTVSNYNVTVNVG.

It belongs to the NIS1 effector family. As to quaternary structure, interacts with the host pattern recognition receptor (PRR)-associated kinases BAK1/SERK3, BKK1/SERK4 and BIK1.

It localises to the secreted. It is found in the host cytoplasm. Its function is as follows. Secreted effector that induces necrotic lesions in Nicotiana benthamiana. Interacts with the host receptor-like kinases (RLKs) BAK1/SERK3 and BKK1/SERK4, inhibits their kinase activity and suppresses INF1-induced pathogen-associated molecular pattern (PAMP)-triggered immunity (PTI) in N.benthamiana. Also interacts with the host receptor-like cytoplasmic kinase (RLCK) BIK1 and inhibits its kinase activity, thereby inhibiting PAMP-induced ROS generation. In PTI, phosphorylation relaying by RLKs and RLCKs is critical for the initiation of downstream signaling. The chain is Necrosis-inducing secreted protein 1 from Colletotrichum orbiculare (strain 104-T / ATCC 96160 / CBS 514.97 / LARS 414 / MAFF 240422) (Cucumber anthracnose fungus).